The chain runs to 411 residues: AT-hook motif nuclear-localized protein 14 (411 aa).

Disordered stretches follow at residues 1 to 32, 54 to 164, 289 to 348, and 366 to 411; these read MDPN…QRLT, ASTG…LGSV, KDAA…HQAG, and THSR…QIPD. Basic residues predominate over residues 7–19; the sequence is HHHHQQQQLHHLH. Residues 20–29 are compositionally biased toward low complexity; sequence QQQQQQQQQQ. The span at 54–66 shows a compositional bias: polar residues; sequence ASTGNAVPSSNNG. The Bipartite nuclear localization signal motif lies at 105–113; the sequence is KRKRGRPRK. The a.T hook DNA-binding region spans 105 to 117; sequence KRKRGRPRKYVTP. Low complexity-rich tracts occupy residues 120-135 and 144-159; these read ALAA…SSSA and VTGG…SKKS. The PPC domain maps to 165 to 305; the sequence is GKTGQCFTPH…GKGDASNSGS (141 aa). The span at 306-315 shows a compositional bias: polar residues; it reads RLTSPVSSGQ. Over residues 374-390 the composition is skewed to gly residues; the sequence is RGGGNSGHDGRGGGGYD.

The protein resides in the nucleus. Transcription factor that specifically binds AT-rich DNA sequences related to the nuclear matrix attachment regions (MARs). In Arabidopsis thaliana (Mouse-ear cress), this protein is AT-hook motif nuclear-localized protein 14.